The sequence spans 1181 residues: Protein P1-P2 (1181 aa).

The signal sequence occupies residues 1-33 (MASFLKPVNSQGLWLSLLLAITYLFLLPSAGQS). Transmembrane regions (helical) follow at residues 172 to 192 (LIEF…VYVA), 194 to 214 (AVPG…WAWP), 218 to 235 (ASSL…IGFL), and 240 to 260 (IGLI…WSLL). A Peptidase S39 domain is found at 318-515 (IPGVQIKKLR…SSSPKFTGCE (198 aa)). Catalysis depends on for protease activity residues H366, D396, and S465. Residues 572–688 (GLWADDTEDD…SCESSPHRPT (117 aa)) form a disordered region. Basic and acidic residues-rich tracts occupy residues 598–608 (GETKSSEDPLP) and 638–648 (EESRQPQEEKG). Residues 649 to 677 (QSCQEDSLNSTQEIQGQSTHFVPSSGTGR) are compositionally biased toward polar residues. In terms of domain architecture, RdRp catalytic spans 979-1094 (RYLTPTDCSG…SVGSDLSQYA (116 aa)).

It belongs to the luteoviruses RNA polymerase family. Specific enzymatic cleavages in vivo yield mature proteins. The protease probably cleaves itself and releases the RdRp (Potential). Cleavages have been shown in the P1 protein, but since the N-terminus containing the serine protease is shared between P1 and P1-P2, cleavages should also occur within the P1-P2 protein.

Its subcellular location is the membrane. The enzyme catalyses RNA(n) + a ribonucleoside 5'-triphosphate = RNA(n+1) + diphosphate. RNA-dependent RNA polymerase that plays an essential role in virus replication. The polypeptide is Protein P1-P2 (Cicer arietinum (Chickpea)).